The chain runs to 342 residues: MIRVAINGYGRIGRSILRALYESGKRQQIQIVAINELAKPEAIRHLTQYDTTHGRFGQTVELQEGKLHIGDDAIALFHQSDATKLPWGELDIDIVFEASGSLIEREACEAHIISGAKQVLISHPSSQDVDATIVYGVNHHLLAAEHTVVSNASCTTNCIVPVIDVLDSHFGVISGAITTIHSAMNDQQVIDAYHDDLRRTRAAGQSIIPVDTKLARGIERILPKMKDKFEAISVRVPTINVTAIDVSVTLRDRVDISIINSVLQQAAKGRFDGILGYTDEPLVSCDFNHDPRSSIVDATQTRVSDGHLVKLLLWCDNEWGFANRMLDTSLAMIRAKSAKSVK.

Position 11–12 (11–12 (RI)) interacts with NAD(+). Substrate is bound by residues 153-155 (SCT), arginine 199, 212-213 (TK), and arginine 235. Cysteine 154 functions as the Nucleophile in the catalytic mechanism. Asparagine 317 serves as a coordination point for NAD(+).

Belongs to the glyceraldehyde-3-phosphate dehydrogenase family. Epd subfamily. Homotetramer.

The protein resides in the cytoplasm. It catalyses the reaction D-erythrose 4-phosphate + NAD(+) + H2O = 4-phospho-D-erythronate + NADH + 2 H(+). It functions in the pathway cofactor biosynthesis; pyridoxine 5'-phosphate biosynthesis; pyridoxine 5'-phosphate from D-erythrose 4-phosphate: step 1/5. Catalyzes the NAD-dependent conversion of D-erythrose 4-phosphate to 4-phosphoerythronate. This Shewanella denitrificans (strain OS217 / ATCC BAA-1090 / DSM 15013) protein is D-erythrose-4-phosphate dehydrogenase.